The primary structure comprises 79 residues: uncharacterized protein (79 aa).

The N-terminal stretch at 1–18 is a signal peptide; that stretch reads MQIKNIVAVLATVTAINA. Residues 24 to 44 form a disordered region; sequence PNATTPNATQPNATQPNTTLP. Asparagine 25, asparagine 30, asparagine 35, and asparagine 40 each carry an N-linked (GlcNAc...) asparagine glycan. Glycine 55 is lipidated: GPI-anchor amidated glycine. A propeptide spans 56 to 79 (removed in mature form); it reads EAVVNTMAAGAFGAAIAAGVAFLF.

It is found in the cell membrane. This is an uncharacterized protein from Saccharomyces cerevisiae (strain ATCC 204508 / S288c) (Baker's yeast).